The chain runs to 542 residues: CTP synthase (542 aa).

Residues 1–265 (MTAFIFITGG…GRMLTELLKV (265 aa)) form an amidoligase domain region. Serine 13 contacts CTP. Serine 13 lines the UTP pocket. 14–19 (SVGKGI) lines the ATP pocket. An L-glutamine-binding site is contributed by tyrosine 54. Aspartate 71 contributes to the ATP binding site. Mg(2+)-binding residues include aspartate 71 and glutamate 140. Residues 147–149 (DYE), 186–191 (KTKPLQ), and lysine 222 each bind CTP. Residues 186–191 (KTKPLQ) and lysine 222 contribute to the UTP site. The Glutamine amidotransferase type-1 domain occupies 297 to 532 (YVKLRDAYIS…LKAALARKMG (236 aa)). Position 352 (glycine 352) interacts with L-glutamine. Cysteine 379 (nucleophile; for glutamine hydrolysis) is an active-site residue. Residues 380–383 (YGMQ), glutamate 403, and arginine 460 contribute to the L-glutamine site. Residues histidine 505 and glutamate 507 contribute to the active site.

This sequence belongs to the CTP synthase family. Homotetramer.

The catalysed reaction is UTP + L-glutamine + ATP + H2O = CTP + L-glutamate + ADP + phosphate + 2 H(+). The enzyme catalyses L-glutamine + H2O = L-glutamate + NH4(+). It catalyses the reaction UTP + NH4(+) + ATP = CTP + ADP + phosphate + 2 H(+). It participates in pyrimidine metabolism; CTP biosynthesis via de novo pathway; CTP from UDP: step 2/2. Allosterically activated by GTP, when glutamine is the substrate; GTP has no effect on the reaction when ammonia is the substrate. The allosteric effector GTP functions by stabilizing the protein conformation that binds the tetrahedral intermediate(s) formed during glutamine hydrolysis. Inhibited by the product CTP, via allosteric rather than competitive inhibition. In terms of biological role, catalyzes the ATP-dependent amination of UTP to CTP with either L-glutamine or ammonia as the source of nitrogen. Regulates intracellular CTP levels through interactions with the four ribonucleotide triphosphates. This chain is CTP synthase, found in Caldivirga maquilingensis (strain ATCC 700844 / DSM 13496 / JCM 10307 / IC-167).